A 332-amino-acid polypeptide reads, in one-letter code: RING-H2 finger protein ATL81 (332 aa).

The first 19 residues, 1 to 19 (MYDLTFLLISLFPIDITLP), serve as a signal peptide directing secretion. A helical transmembrane segment spans residues 76 to 96 (IVLTGSLLFIIFTGFFSFFFC). An RING-type; atypical zinc finger spans residues 154-196 (CSICLTEFMDDDTIRLISTCNHSFHTICIDLWFEGHKTCPVCR).

The protein belongs to the RING-type zinc finger family. ATL subfamily.

Its subcellular location is the membrane. It carries out the reaction S-ubiquitinyl-[E2 ubiquitin-conjugating enzyme]-L-cysteine + [acceptor protein]-L-lysine = [E2 ubiquitin-conjugating enzyme]-L-cysteine + N(6)-ubiquitinyl-[acceptor protein]-L-lysine.. It participates in protein modification; protein ubiquitination. The sequence is that of RING-H2 finger protein ATL81 (ATL81) from Arabidopsis thaliana (Mouse-ear cress).